The primary structure comprises 594 residues: CTP synthase (594 aa).

The amidoligase domain stretch occupies residues 1-272 (MARPKNVKYV…DLRVLKKLGL (272 aa)). Position 18 (Ser-18) interacts with CTP. Residue Ser-18 coordinates UTP. Position 19 to 24 (19 to 24 (SLGKGI)) interacts with ATP. Position 59 (Tyr-59) interacts with L-glutamine. Asp-76 is a binding site for ATP. Mg(2+)-binding residues include Asp-76 and Glu-146. CTP-binding positions include 153–155 (DIE), 193–198 (KTKPTQ), and Lys-229. Residues 193 to 198 (KTKPTQ) and Lys-229 contribute to the UTP site. Residues 299–543 (TIVVCGKYTE…VGAAKSYAAV (245 aa)) form the Glutamine amidotransferase type-1 domain. Residue Gly-363 participates in L-glutamine binding. Residue Cys-390 is the Nucleophile; for glutamine hydrolysis of the active site. Residues 391-394 (LGMQ), Glu-414, and Arg-471 contribute to the L-glutamine site. Catalysis depends on residues His-516 and Glu-518. Residues 562-571 (AEAYAAYSEE) are compositionally biased toward low complexity. The interval 562–594 (AEAYAAYSEESSAESKSFFPDNGGHDEERDSGQ) is disordered. Residues 584-594 (GGHDEERDSGQ) show a composition bias toward basic and acidic residues.

The protein belongs to the CTP synthase family. In terms of assembly, homotetramer.

The catalysed reaction is UTP + L-glutamine + ATP + H2O = CTP + L-glutamate + ADP + phosphate + 2 H(+). The enzyme catalyses L-glutamine + H2O = L-glutamate + NH4(+). It carries out the reaction UTP + NH4(+) + ATP = CTP + ADP + phosphate + 2 H(+). It participates in pyrimidine metabolism; CTP biosynthesis via de novo pathway; CTP from UDP: step 2/2. With respect to regulation, allosterically activated by GTP, when glutamine is the substrate; GTP has no effect on the reaction when ammonia is the substrate. The allosteric effector GTP functions by stabilizing the protein conformation that binds the tetrahedral intermediate(s) formed during glutamine hydrolysis. Inhibited by the product CTP, via allosteric rather than competitive inhibition. Catalyzes the ATP-dependent amination of UTP to CTP with either L-glutamine or ammonia as the source of nitrogen. Regulates intracellular CTP levels through interactions with the four ribonucleotide triphosphates. This chain is CTP synthase, found in Chlorobium phaeovibrioides (strain DSM 265 / 1930) (Prosthecochloris vibrioformis (strain DSM 265)).